The following is a 606-amino-acid chain: Elongation factor 4 (606 aa).

The region spanning 7–189 (SRIRNFCIIA…AVVDRVPPPK (183 aa)) is the tr-type G domain. GTP contacts are provided by residues 19 to 24 (DHGKST) and 136 to 139 (NKID).

Belongs to the TRAFAC class translation factor GTPase superfamily. Classic translation factor GTPase family. LepA subfamily.

Its subcellular location is the cell inner membrane. The enzyme catalyses GTP + H2O = GDP + phosphate + H(+). In terms of biological role, required for accurate and efficient protein synthesis under certain stress conditions. May act as a fidelity factor of the translation reaction, by catalyzing a one-codon backward translocation of tRNAs on improperly translocated ribosomes. Back-translocation proceeds from a post-translocation (POST) complex to a pre-translocation (PRE) complex, thus giving elongation factor G a second chance to translocate the tRNAs correctly. Binds to ribosomes in a GTP-dependent manner. This is Elongation factor 4 from Synechococcus sp. (strain CC9605).